The following is a 278-amino-acid chain: HTH-type transcriptional activator RhaS (278 aa).

One can recognise an HTH araC/xylS-type domain in the interval 174-272; sequence NQLMAWLEDH…NWSPRDIRQG (99 aa). 2 DNA-binding regions (H-T-H motif) span residues 191–212 and 239–262; these read EAVA…KQHT and VTEI…RREF.

As to quaternary structure, binds DNA as a dimer.

It is found in the cytoplasm. Activates expression of the rhaBAD and rhaT operons. The polypeptide is HTH-type transcriptional activator RhaS (Salmonella agona (strain SL483)).